We begin with the raw amino-acid sequence, 146 residues long: Hemoglobin subunit beta (146 aa).

Valine 1 carries the N-acetylvaline modification. A Globin domain is found at histidine 2–histidine 146. A Phosphoserine modification is found at serine 44. At lysine 59 the chain carries N6-acetyllysine. Residue histidine 63 coordinates heme b. Residue lysine 82 is modified to N6-acetyllysine. Histidine 92 is a heme b binding site. Residue cysteine 93 is modified to S-nitrosocysteine. Lysine 144 carries the post-translational modification N6-acetyllysine.

Belongs to the globin family. Heterotetramer of two alpha chains and two beta chains. In terms of tissue distribution, red blood cells.

Functionally, involved in oxygen transport from the lung to the various peripheral tissues. The protein is Hemoglobin subunit beta of Otospermophilus beecheyi (California ground squirrel).